The following is a 183-amino-acid chain: DELTA-miturgitoxin-Cp1b (183 aa).

The N-terminal stretch at M1–S20 is a signal peptide. A propeptide spanning residues E21–R47 is cleaved from the precursor. The Processing quadruplet motif signature appears at D44 to R47. Disulfide bonds link C51–C66, C58–C75, C65–C88, C77–C86, C115–C130, C122–C139, C129–C157, and C141–C155. The tract at residues Q164–I177 is predicted alpha-helix. The residue at position 181 (W181) is a Tryptophan amide.

Belongs to the neurotoxin 19 (CSTX) family. Double-CSTX subfamily. Cleavage of the propeptide depends on the processing quadruplet motif (XXXR, with at least one of X being E). In terms of tissue distribution, expressed by the venom gland.

It is found in the secreted. The protein localises to the target cell membrane. Spider venom toxin that exhibits cytolytic activity by forming an alpha-helix across the membrane. Lethal to insect larvae. Causes instant paralysis and death in the larvae of the flesh fly (S.carnaria) at doses of 20 ug/g, at doses of less than 10 ug/g causes reversible paralysis. Has cytolytic activity against insect Sf9 cells. Causes stable and irreversible depolarization of fly muscle fibers, leading to contracture at higher toxin concentrations. Destabilizes membranes. The protein is DELTA-miturgitoxin-Cp1b of Cheiracanthium punctorium (Yellow sac spider).